Consider the following 247-residue polypeptide: Uridylate kinase (247 aa).

15–18 (KLSG) is an ATP binding site. The involved in allosteric activation by GTP stretch occupies residues 23–28 (GEEGFG). Gly-57 is a binding site for UMP. Residues Gly-58 and Arg-62 each contribute to the ATP site. Residues Asp-77 and 138–145 (TGNPFFTT) contribute to the UMP site. ATP-binding residues include Thr-165, Tyr-171, and Asp-174.

This sequence belongs to the UMP kinase family. In terms of assembly, homohexamer.

The protein resides in the cytoplasm. The enzyme catalyses UMP + ATP = UDP + ADP. The protein operates within pyrimidine metabolism; CTP biosynthesis via de novo pathway; UDP from UMP (UMPK route): step 1/1. Allosterically activated by GTP. Inhibited by UTP. Its function is as follows. Catalyzes the reversible phosphorylation of UMP to UDP. The protein is Uridylate kinase of Pseudoalteromonas atlantica (strain T6c / ATCC BAA-1087).